The sequence spans 85 residues: MEKLTFLILVATVLLTIHVLVQSDGDKHLKRRPKQYATKRLSALMRGHRQCTPQNVKCEEDDECCSNLECKCSTVPDCNFPKCRP.

An N-terminal signal peptide occupies residues 1–23 (MEKLTFLILVATVLLTIHVLVQS). The propeptide occupies 24–49 (DGDKHLKRRPKQYATKRLSALMRGHR). At glutamine 50 the chain carries Pyrrolidone carboxylic acid.

It belongs to the conotoxin O2 superfamily. Contains 4 disulfide bonds. As to expression, expressed by the venom duct.

The protein resides in the secreted. This Conus capitaneus (Captain cone) protein is Conotoxin Cap15b.